We begin with the raw amino-acid sequence, 382 residues long: Zinc metalloproteinase nas-7 (382 aa).

The N-terminal stretch at 1 to 18 (MLLPWIITIVTVIPATLG) is a signal peptide. The propeptide occupies 19–79 (HRNRVQDDEM…DIRLPRRHKR (61 aa)). Positions 80–273 (NGVSRAAKLW…SKINRMYNCP (194 aa)) constitute a Peptidase M12A domain. Intrachain disulfides connect Cys122–Cys272, Cys144–Cys163, Cys348–Cys382, Cys355–Cys375, and Cys362–Cys379. Position 171 (His171) interacts with Zn(2+). Glu172 is a catalytic residue. Zn(2+) contacts are provided by His175 and His181. The ShKT domain occupies 348 to 382 (CEDRITVCWWTADRCRSPAIYQVMSSLCPKTCKFC).

The cofactor is Zn(2+). In terms of tissue distribution, expressed in the head of adult hermaphrodites but not within pharynx cells. Expressed in pharyngeal muscles, mc cells, intestine, hypodermal seam cells, arcade cells, spermatheca, vulva and rectal epithelial cells.

It is found in the secreted. Metalloprotease. The sequence is that of Zinc metalloproteinase nas-7 (nas-7) from Caenorhabditis elegans.